The sequence spans 303 residues: Glycine--tRNA ligase alpha subunit (303 aa).

Belongs to the class-II aminoacyl-tRNA synthetase family. As to quaternary structure, tetramer of two alpha and two beta subunits.

It is found in the cytoplasm. The enzyme catalyses tRNA(Gly) + glycine + ATP = glycyl-tRNA(Gly) + AMP + diphosphate. This is Glycine--tRNA ligase alpha subunit (glyQ) from Escherichia coli (strain K12).